Here is a 363-residue protein sequence, read N- to C-terminus: Probable matrix metalloproteinase 095L (363 aa).

The N-terminal stretch at 1 to 25 is a signal peptide; the sequence is MSVDSFTSRLAVVMTAVVLVWWAQA. Residues 26–126 constitute a propeptide, activation peptide; the sequence is LPVPSPRRGE…PRCGVPDVSK (101 aa). The Cysteine switch signature appears at 117-124; it reads PRCGVPDV. Zn(2+) contacts are provided by Cys-119 and His-275. Glu-276 is a catalytic residue. Positions 279 and 285 each coordinate Zn(2+).

The protein belongs to the peptidase M10A family. Requires Zn(2+) as cofactor.

The protein localises to the secreted. Probable endopeptidase. The sequence is that of Probable matrix metalloproteinase 095L from Aedes vexans (Inland floodwater mosquito).